The primary structure comprises 378 residues: Formate dehydrogenase 2, mitochondrial (378 aa).

Residues 1-18 (MAMWRAPSAAGQLLGRAL) constitute a mitochondrion transit peptide. Residues valine 122 and asparagine 146 each contribute to the substrate site. NAD(+) contacts are provided by residues threonine 147, 201–202 (RI), aspartate 221, 256–260 (PLTEK), asparagine 282, aspartate 308, and 332–335 (HCSG).

The protein belongs to the D-isomer specific 2-hydroxyacid dehydrogenase family. FDH subfamily. Homodimer.

Its subcellular location is the mitochondrion. It carries out the reaction formate + NAD(+) = CO2 + NADH. In terms of biological role, catalyzes the NAD(+)-dependent oxidation of formate to carbon dioxide. Involved in the cell stress response. This is Formate dehydrogenase 2, mitochondrial from Oryza sativa subsp. japonica (Rice).